We begin with the raw amino-acid sequence, 203 residues long: Small ribosomal subunit protein uS4 (203 aa).

Positions 15–46 are disordered; that stretch reads LGENIWGRPKSSVNRRSYGPGQHGQRRKSKVS. Positions 94–154 constitute an S4 RNA-binding domain; the sequence is QRLDMVVYRA…KKAKEMALIA (61 aa).

This sequence belongs to the universal ribosomal protein uS4 family. As to quaternary structure, part of the 30S ribosomal subunit. Contacts protein S5. The interaction surface between S4 and S5 is involved in control of translational fidelity.

Functionally, one of the primary rRNA binding proteins, it binds directly to 16S rRNA where it nucleates assembly of the body of the 30S subunit. In terms of biological role, with S5 and S12 plays an important role in translational accuracy. This chain is Small ribosomal subunit protein uS4, found in Novosphingobium aromaticivorans (strain ATCC 700278 / DSM 12444 / CCUG 56034 / CIP 105152 / NBRC 16084 / F199).